Here is a 490-residue protein sequence, read N- to C-terminus: Putative alanine aminotransferase (490 aa).

5 residues coordinate pyridoxal 5'-phosphate: alanine 157, serine 158, tyrosine 183, asparagine 239, and serine 308. Lysine 311 bears the N6-(pyridoxal phosphate)lysine mark. Arginine 320 contacts pyridoxal 5'-phosphate.

Belongs to the class-I pyridoxal-phosphate-dependent aminotransferase family. Alanine aminotransferase subfamily. As to quaternary structure, homodimer. The cofactor is pyridoxal 5'-phosphate.

Its subcellular location is the cytoplasm. The protein localises to the mitochondrion. The enzyme catalyses L-alanine + 2-oxoglutarate = pyruvate + L-glutamate. It functions in the pathway amino-acid degradation; L-alanine degradation via transaminase pathway; pyruvate from L-alanine: step 1/1. Functionally, alanine aminotransferase involved in both alanine biosynthesis and utilization. The protein is Putative alanine aminotransferase (alt1) of Schizosaccharomyces pombe (strain 972 / ATCC 24843) (Fission yeast).